We begin with the raw amino-acid sequence, 185 residues long: MGRGKTPNLGEFRVATDQSASRKISQFCVRLEAKQRLRFNYGLTERQLLKYVRIARKTRGSTGQVPPQLLEMRLDNVIFRLGMASTIPAARQLVNHRHILVNNRIVDVPSYRCKPKDIITVRNRPTSCNALKGESPGGGETPDHLTASLSEGSRPTGLVNRIANRESVNLNINELLVVEYYSRKA.

In terms of domain architecture, S4 RNA-binding spans 72–134 (MRLDNVIFRL…PTSCNALKGE (63 aa)). The interval 132–154 (KGESPGGGETPDHLTASLSEGSR) is disordered.

This sequence belongs to the universal ribosomal protein uS4 family. In terms of assembly, part of the 30S ribosomal subunit. Contacts protein S5. The interaction surface between S4 and S5 is involved in control of translational fidelity.

The protein localises to the plastid. It is found in the chloroplast. Functionally, one of the primary rRNA binding proteins, it binds directly to 16S rRNA where it nucleates assembly of the body of the 30S subunit. With S5 and S12 plays an important role in translational accuracy. In Woodwardia unigemmata (Chainfern), this protein is Small ribosomal subunit protein uS4c (rps4).